The chain runs to 766 residues: Semaphorin-4E (766 aa).

A signal peptide spans 1–24; sequence MMSLLAVLCVLYVWSPAMLTGGLG. Residues 25-664 lie on the Extracellular side of the membrane; that stretch reads STLDSLPRKT…LHHVKEKERT (640 aa). The Sema domain maps to 27–499; sequence LDSLPRKTVP…SEVGVVQLSI (473 aa). N52 carries an N-linked (GlcNAc...) asparagine glycan. 4 disulfides stabilise this stretch: C100–C111, C129–C138, C261–C373, and C285–C329. N433 carries N-linked (GlcNAc...) asparagine glycosylation. Residues 501 to 552 enclose the PSI domain; the sequence is ECGRYQTCLDCVLARDPHCGWDLDTEHCATINSIHRTRSSTVIQSLNDGDAS. 2 cysteine pairs are disulfide-bonded: C502–C519 and C511–C528. The Ig-like C2-type domain maps to 555 to 640; sequence PAIGVSKPVN…QRKYQTQHVA (86 aa). N-linked (GlcNAc...) asparagine glycosylation is found at N564 and N612. C577 and C623 are oxidised to a cystine. A helical membrane pass occupies residues 665–685; sequence LVAMVVILSLVLAALLIWNLY. The Cytoplasmic portion of the chain corresponds to 686 to 766; the sequence is KGHLSLPCLH…LKYIDDESEI (81 aa). Residues 724–750 form a disordered region; sequence FNSNNNHANDQRYSSSRETDRLSTTAG.

Belongs to the semaphorin family.

The protein localises to the membrane. In Danio rerio (Zebrafish), this protein is Semaphorin-4E (sema4e).